The chain runs to 469 residues: MKKYVLLLSILFISVAFSQESVEDLKRLLEEYKKKIQEIERRLEELEKAKKEEEKKKEAVALKPTPADRTLKIRTKYEERLGAYQVSPFSQKAFLPDISLILDFSFVGRNKKDSELKELEIPALYHGHGGHEHGELNEKRGFNLNYAELFLYAPVDPYFDLYATIPFSEDGSTVEEAYAVTRGLPYGFQVKVGKFRSSFGRLNSQHPHVWEFANPPLVYKVFLGEGLIEKGVQVNWLAPVPFYLLLGAEVLQGENEMSFGTEGFSVNEDLRVPDTPKPNLYVGFLKTSFDVGNLSLLGGISYAYGRTRINHLEDEEEPHAFAGRTKIYGLDLTAKYFIDSYRYLAFQGEYLYRRQEGTKYTPESTSPLTKKQGGLYAQVVWKFDRRWRTGIQYNLINKNELKVNGIKKDLPDDLSAYYWMLEFNPTEFSRIRLQLGQNRAFYKEDKRKTINEFIFQFNFVIGAHTSHPF.

Residues 11 to 65 (LFISVAFSQESVEDLKRLLEEYKKKIQEIERRLEELEKAKKEEEKKKEAVALKPT) are a coiled coil.

This is an uncharacterized protein from Aquifex aeolicus (strain VF5).